The primary structure comprises 227 residues: MFESISGILTLHERERLCVEVHGIEWEIAVSAYSSAAFGEVGSHVKVFTWLYHREDALRLFGFSNVQERTLFLSLTKVEGIGPKQALKVLSSISSQALCAALDTGDLCALQRIPGIGKKTAQRMLLALKGTLALTDAASCAQSQTDDRAAHPSNLGCAPHAREIEDLVTALVQMGYDRKMAAEVIAQESAALCSVGRSLYEEEATVLKRAILALSIAHPHAVAPAAE.

A domain I region spans residues 1–64; sequence MFESISGILT…EDALRLFGFS (64 aa). The domain II stretch occupies residues 65–143; the sequence is NVQERTLFLS…LTDAASCAQS (79 aa). The tract at residues 144 to 158 is flexible linker; it reads QTDDRAAHPSNLGCA. The segment at 159–227 is domain III; the sequence is PHAREIEDLV…HPHAVAPAAE (69 aa).

It belongs to the RuvA family. As to quaternary structure, homotetramer. Forms an RuvA(8)-RuvB(12)-Holliday junction (HJ) complex. HJ DNA is sandwiched between 2 RuvA tetramers; dsDNA enters through RuvA and exits via RuvB. An RuvB hexamer assembles on each DNA strand where it exits the tetramer. Each RuvB hexamer is contacted by two RuvA subunits (via domain III) on 2 adjacent RuvB subunits; this complex drives branch migration. In the full resolvosome a probable DNA-RuvA(4)-RuvB(12)-RuvC(2) complex forms which resolves the HJ.

The protein localises to the cytoplasm. The RuvA-RuvB-RuvC complex processes Holliday junction (HJ) DNA during genetic recombination and DNA repair, while the RuvA-RuvB complex plays an important role in the rescue of blocked DNA replication forks via replication fork reversal (RFR). RuvA specifically binds to HJ cruciform DNA, conferring on it an open structure. The RuvB hexamer acts as an ATP-dependent pump, pulling dsDNA into and through the RuvAB complex. HJ branch migration allows RuvC to scan DNA until it finds its consensus sequence, where it cleaves and resolves the cruciform DNA. The protein is Holliday junction branch migration complex subunit RuvA of Treponema pallidum (strain Nichols).